The following is a 214-amino-acid chain: Osteoclast-stimulating factor 1 (214 aa).

Residue Ser2 is modified to N-acetylserine. An SH3 domain is found at 12-71; it reads GQVKVFRALYTFEPRTPDELYFEEGDIIYITDMSDTNWWKGTCKGRTGLIPSNYVAEQAE. 3 ANK repeats span residues 72 to 101, 105 to 135, and 139 to 168; these read SIDN…GVNG, AGST…ELNQ, and LGDT…RTDL. Ser202 and Ser213 each carry phosphoserine.

As to quaternary structure, interacts with SRC and SMN1. Interacts with FASLG.

The protein localises to the cytoplasm. Functionally, induces bone resorption, acting probably through a signaling cascade which results in the secretion of factor(s) enhancing osteoclast formation and activity. The sequence is that of Osteoclast-stimulating factor 1 (OSTF1) from Bos taurus (Bovine).